The primary structure comprises 124 residues: Darcynin homolog (124 aa).

The protein belongs to the darcynin family.

The sequence is that of Darcynin homolog from Granulibacter bethesdensis (strain ATCC BAA-1260 / CGDNIH1).